Here is a 282-residue protein sequence, read N- to C-terminus: Diaminopimelate epimerase (282 aa).

Residues Asn13, Gln45, and Asn64 each contribute to the substrate site. Catalysis depends on Cys73, which acts as the Proton donor. Substrate is bound by residues 74–75 (GN), Asn155, Asn189, and 207–208 (ER). The Proton acceptor role is filled by Cys216. 217-218 (GS) is a binding site for substrate.

This sequence belongs to the diaminopimelate epimerase family. In terms of assembly, homodimer.

The protein resides in the cytoplasm. It carries out the reaction (2S,6S)-2,6-diaminopimelate = meso-2,6-diaminopimelate. Its pathway is amino-acid biosynthesis; L-lysine biosynthesis via DAP pathway; DL-2,6-diaminopimelate from LL-2,6-diaminopimelate: step 1/1. Its function is as follows. Catalyzes the stereoinversion of LL-2,6-diaminopimelate (L,L-DAP) to meso-diaminopimelate (meso-DAP), a precursor of L-lysine and an essential component of the bacterial peptidoglycan. In Bartonella bacilliformis (strain ATCC 35685 / KC583 / Herrer 020/F12,63), this protein is Diaminopimelate epimerase.